Here is a 310-residue protein sequence, read N- to C-terminus: MAGDKGGYRQINSSLNICAFEDYLKSQTDNLPELPDVEQITPRVLRVLGQNPGKFTYQGTNTYIVGTGKHRLIVDTSGGEIEWAELLESTLSSLNISLSHVLLTHWHGDHTGGVPDLLRIYPHLEHDIYKNEPESGQQDIVDGQIFRVEGATVRALHVPGHSDDHMCFILEEEQAMFTGDNILGHGTSAVEDLGTFMASMQRMLDQRCLTGYSAHGAVIADLPGKIRTELANKRRREKQILLALGRVRQRRQKSITVEDLVTEIYGESMDESTRTLALTPFTDEVLRKLAGDFKVAFEVRAGKRRWYSVE.

Zn(2+) is bound by residues His105, His107, Asp109, and His110. The Proton donor/acceptor role is filled by Asp109.

It belongs to the metallo-beta-lactamase superfamily. Requires Zn(2+) as cofactor.

It catalyses the reaction atrochrysone carboxyl-[ACP] + H2O = atrochrysone carboxylate + holo-[ACP] + H(+). Its pathway is pigment biosynthesis. Functionally, atrochrysone carboxyl ACP thioesterase; part of the ergochrome gene cluster responsible for the typical purple-black color of the ergot sclerotia. The ergochrome gene cluster produces several ergot pigments including the yellow ergochrome secalonic acid and its derivatives, as well as the red anthraquinones endocrocin and clavorubin. The pathway begins with the synthesis of atrochrysone thioester by the polyketide synthase (PKS) CPUR_05437. The atrochrysone carboxyl ACP thioesterase CPUR_05436 then breaks the thioester bond and releases the atrochrysone carboxylic acid from CPUR_05437. The atrochrysone carboxylic acid is then converted to atrochrysone which is further transformed into emodin anthrone. The next step is performed by the anthrone oxygenase CPUR_05434 that catalyzes the oxidation of emodinanthrone to emodin. Emodin is further modified to yield monodictyphenone via several steps involving CPUR_05427, CPUR_05428, CPUR_05429 and CPUR_05430. The short chain dehydrogenase/reductase CPUR_05418 then catalyzes the C-5 ketoreduction to give the xanthone skeleton of the monomeric units. Ergochromes formation requires further dimerization steps of different xanthone units, probably catalyzed by the cytochrome P450 monooxygenase CPUR_05419. CPUR_05425, CPUR_05426 and CPUR_05431 are unique to Claviceps, thus it is likely that they are involved in further modification of xanthone units or in their dimerization. The yellow ergochromes and the red anthraquinone pigments endocrocin and clavorubin are products from the same PKS derived precursors and the latter are likely shunt products in the pathway of xanthone biosynthesis. It is proposed that atrochrysone carboxylic acid released from the PKS CPUR_05437 can also be converted to endocrocin anthrone which is further oxidized into endocrocin by CPUR_05435. Endocrocin could be then modified to clavorubin, possibly by CPUR_05423 and CPUR_05431. Clavorubin is the principal anthraquinone metabolite produced by the cluster with a much higher yield compared to endocrocin. The protein is Atrochrysone carboxyl ACP thioesterase CPUR_05436 of Claviceps purpurea (strain 20.1) (Ergot fungus).